A 92-amino-acid chain; its full sequence is Putative defensin-like protein 251 (92 aa).

An N-terminal signal peptide occupies residues 1 to 27 (MRCVTSFVVFCILMFFVLNIFTVEVKA). 4 disulfide bridges follow: Cys-34–Cys-90, Cys-45–Cys-69, Cys-53–Cys-82, and Cys-67–Cys-84.

Belongs to the DEFL family.

The protein localises to the secreted. In Arabidopsis thaliana (Mouse-ear cress), this protein is Putative defensin-like protein 251 (SCRL12).